Reading from the N-terminus, the 118-residue chain is Non-specific lipid-transfer protein (118 aa).

The N-terminal stretch at 1-27 (MGVSKVAIAVAVMLMVVVINHPAVVEG) is a signal peptide. 4 disulfides stabilise this stretch: Cys-30–Cys-75, Cys-40–Cys-54, Cys-55–Cys-100, and Cys-77–Cys-114.

Belongs to the plant LTP family. Disulfide bonds.

Its function is as follows. Plant non-specific lipid-transfer proteins transfer phospholipids as well as galactolipids across membranes. May play a role in wax or cutin deposition in the cell walls of expanding epidermal cells and certain secretory tissues. In Apium graveolens (Celery), this protein is Non-specific lipid-transfer protein.